A 318-amino-acid chain; its full sequence is Pantothenate kinase (318 aa).

Residue 96-103 (GSVAVGKS) participates in ATP binding.

The protein belongs to the prokaryotic pantothenate kinase family.

Its subcellular location is the cytoplasm. It carries out the reaction (R)-pantothenate + ATP = (R)-4'-phosphopantothenate + ADP + H(+). The protein operates within cofactor biosynthesis; coenzyme A biosynthesis; CoA from (R)-pantothenate: step 1/5. This chain is Pantothenate kinase, found in Coxiella burnetii (strain CbuK_Q154) (Coxiella burnetii (strain Q154)).